A 244-amino-acid polypeptide reads, in one-letter code: 5-oxoprolinase subunit A (244 aa).

It belongs to the LamB/PxpA family. In terms of assembly, forms a complex composed of PxpA, PxpB and PxpC.

The catalysed reaction is 5-oxo-L-proline + ATP + 2 H2O = L-glutamate + ADP + phosphate + H(+). Catalyzes the cleavage of 5-oxoproline to form L-glutamate coupled to the hydrolysis of ATP to ADP and inorganic phosphate. The sequence is that of 5-oxoprolinase subunit A from Salmonella newport (strain SL254).